We begin with the raw amino-acid sequence, 125 residues long: Small ribosomal subunit protein bS6 (125 aa).

Belongs to the bacterial ribosomal protein bS6 family.

Functionally, binds together with bS18 to 16S ribosomal RNA. This is Small ribosomal subunit protein bS6 from Baumannia cicadellinicola subsp. Homalodisca coagulata.